A 170-amino-acid polypeptide reads, in one-letter code: Zinc finger matrin-type protein 5 (170 aa).

The C3H1-type zinc-finger motif lies at 51–79 (EQNKRPCRKFLLTGQCDFGSNCRFSHMSE). A disordered region spans residues 150–170 (PPSLRAPPPGGWPLQPSVQWG).

In terms of assembly, component of the U11/U12 snRNPs that are part of the U12-type spliceosome.

The protein localises to the nucleus. In Bos taurus (Bovine), this protein is Zinc finger matrin-type protein 5 (ZMAT5).